The following is a 343-amino-acid chain: Thiamine thiazole synthase 4, chloroplastic (343 aa).

Substrate contacts are provided by residues alanine 89, glutamate 109–glutamine 110, glycine 117, and alanine 182. A 2,3-didehydroalanine (Cys) modification is found at cysteine 211. Substrate contacts are provided by residues aspartate 213, histidine 228, methionine 280, and arginine 290–glycine 292.

The protein belongs to the THI4 family. Homooctamer. Fe cation is required as a cofactor. Post-translationally, during the catalytic reaction, a sulfide is transferred from Cys-211 to a reaction intermediate, generating a dehydroalanine residue.

Its subcellular location is the plastid. It is found in the chloroplast. The enzyme catalyses [ADP-thiazole synthase]-L-cysteine + glycine + NAD(+) = [ADP-thiazole synthase]-dehydroalanine + ADP-5-ethyl-4-methylthiazole-2-carboxylate + nicotinamide + 3 H2O + 2 H(+). In terms of biological role, involved in biosynthesis of the thiamine precursor thiazole. Catalyzes the conversion of NAD and glycine to adenosine diphosphate 5-(2-hydroxyethyl)-4-methylthiazole-2-carboxylic acid (ADT), an adenylated thiazole intermediate. The reaction includes an iron-dependent sulfide transfer from a conserved cysteine residue of the protein to a thiazole intermediate. The enzyme can only undergo a single turnover, which suggests it is a suicide enzyme. May have additional roles in adaptation to various stress conditions and in DNA damage tolerance. The polypeptide is Thiamine thiazole synthase 4, chloroplastic (Physcomitrium patens (Spreading-leaved earth moss)).